Here is a 397-residue protein sequence, read N- to C-terminus: MQKQNIVILGSTGSIGKSTLSVIENNPEKYHAFALVGGKNVETMFEQCIKFRPHFAALDDVNAAKILREKLIAHHIPTEVLAGQRAICELAAHPDADQIMASIVGAAGLLPTLSAVKAGKRVLLANKESLVTCGQLFIDAVKNYSAKLLPVDSEHNAIFQSLPPEAQEKIGFCPLSELGVSKIILTGSGGPFRYTPLEQFTNITPEQAVAHPNWSMGKKISVDSATMMNKGLEYIEARWLFNASAEEMEVIIHPQSIIHSMVRYVDGSVIAQMGNPDMRTPIAETMAYPHRTFAGVEPLDFFKIKELTFIEPDFNRYPNLKLAIDAFAAGQYATTAMNTANEIAVQAFLDRQISFMDIAKINLKTIEKISPYTIQNIDDVLEIDAQAREIAKTLIRE.

NADPH-binding residues include Thr-12, Gly-13, Ser-14, Ile-15, Gly-38, Lys-39, Asn-40, and Asn-126. Position 127 (Lys-127) interacts with 1-deoxy-D-xylulose 5-phosphate. Residue Glu-128 coordinates NADPH. Asp-152 lines the Mn(2+) pocket. Residues Ser-153, Glu-154, Ser-188, and His-211 each contribute to the 1-deoxy-D-xylulose 5-phosphate site. Glu-154 contributes to the Mn(2+) binding site. Gly-217 provides a ligand contact to NADPH. Residues Ser-224, Asn-229, Lys-230, and Glu-233 each contribute to the 1-deoxy-D-xylulose 5-phosphate site. Glu-233 contacts Mn(2+).

It belongs to the DXR family. Mg(2+) serves as cofactor. Requires Mn(2+) as cofactor.

The enzyme catalyses 2-C-methyl-D-erythritol 4-phosphate + NADP(+) = 1-deoxy-D-xylulose 5-phosphate + NADPH + H(+). It functions in the pathway isoprenoid biosynthesis; isopentenyl diphosphate biosynthesis via DXP pathway; isopentenyl diphosphate from 1-deoxy-D-xylulose 5-phosphate: step 1/6. Its function is as follows. Catalyzes the NADPH-dependent rearrangement and reduction of 1-deoxy-D-xylulose-5-phosphate (DXP) to 2-C-methyl-D-erythritol 4-phosphate (MEP). This Haemophilus influenzae (strain PittEE) protein is 1-deoxy-D-xylulose 5-phosphate reductoisomerase.